Here is a 292-residue protein sequence, read N- to C-terminus: DCN1-like protein 4 (292 aa).

Residues 43–83 (HQTGSLRSCSSSDCFNKVMPPRKKRRPASGDDLSAKKSRHD) are disordered. Residues 45-56 (TGSLRSCSSSDC) are compositionally biased toward polar residues. A Glycyl lysine isopeptide (Lys-Gly) (interchain with G-Cter in SUMO2) cross-link involves residue K95. The region spanning 101–287 (FSSKRCLEWF…LLDEFVEWYK (187 aa)) is the DCUN1 domain.

Interacts (via the DCUN1 domain) with the unneddylated cullins: interacts with CUL1, CUL2, CUL3, CUL4A, CUL4B and CUL5; these interactions promote the cullin neddylation and the identity of the cullin dictates the affinity of the interaction. Interacts with RBX1 and RNF7. Interacts with CAND1; this interaction is bridged by cullins such as CUL3 and strongly inhibits the neddylation of CUL3. These CAND-cullin-DCNL complexes can only be neddylated in the presence of a substrate adapter. Interacts (via DCUN1 domain) with UBE2M (N-terminally acetylated form) and probably with UBE2F (N-terminally acetylated form).

The protein resides in the nucleus. Functionally, contributes to the neddylation of all cullins by transferring NEDD8 from N-terminally acetylated NEDD8-conjugating E2s enzyme to different cullin C-terminal domain-RBX complexes which are necessary for the activation of cullin-RING E3 ubiquitin ligases (CRLs). In Homo sapiens (Human), this protein is DCN1-like protein 4.